A 453-amino-acid chain; its full sequence is MARSSSWHRMSNFMRKYRKIPHSSFKTKWNENLKQKYAMEELRSNLLTDSENASVMRTLLSSFQLHNCEPTPQAYRFVIKTLAKSSQLENISSVLYHLEVSEKFDTPESIFRDVIAAYGFSGRIEEAIEVFFKIPNFRCVPSAYTLNALLLVLVRKRQSLELVPEILVKACRMGVRLEESTFGILIDALCRIGEVDCATELVRYMSQDSVIVDPRLYSRLLSSVCKHKDSSCFDVIGYLEDLRKTRFSPGLRDYTVVMRFLVEGGRGKEVVSVLNQMKCDRVEPDLVCYTIVLQGVIADEDYPKADKLFDELLLLGLAPDVYTYNVYINGLCKQNDIEGALKMMSSMNKLGSEPNVVTYNILIKALVKAGDLSRAKTLWKEMETNGVNRNSHTFDIMISAYIEVDEVVCAHGLLEEAFNMNVFVKSSRIEEVISRLCEKGLMDQAVELLAHLV.

A mitochondrion-targeting transit peptide spans 1 to 77; sequence MARSSSWHRM…CEPTPQAYRF (77 aa). 9 PPR repeats span residues 107 to 141, 142 to 177, 178 to 212, 213 to 249, 250 to 284, 285 to 319, 320 to 354, 355 to 389, and 390 to 424; these read PESI…RCVP, SAYT…GVRL, EEST…SVIV, DPRL…RFSP, GLRD…RVEP, DLVC…GLAP, DVYT…GSEP, NVVT…GVNR, and NSHT…NVFV.

This sequence belongs to the PPR family. P subfamily.

Its subcellular location is the mitochondrion. This Arabidopsis thaliana (Mouse-ear cress) protein is Pentatricopeptide repeat-containing protein At2g38420, mitochondrial.